The primary structure comprises 162 residues: Large ribosomal subunit protein uL30 (162 aa).

Belongs to the universal ribosomal protein uL30 family. As to quaternary structure, part of the 50S ribosomal subunit.

This is Large ribosomal subunit protein uL30 from Korarchaeum cryptofilum (strain OPF8).